The sequence spans 129 residues: Antileukoproteinase (129 aa).

The first 22 residues, 1-22, serve as a signal peptide directing secretion; it reads GRGLLPFVLLALGIXAPWAVEG. 2 WAP domains span residues 25–73 and 79–127; these read NALK…LNPV and VKVK…LTPV. 8 cysteine pairs are disulfide-bonded: cysteine 32-cysteine 61, cysteine 40-cysteine 65, cysteine 48-cysteine 60, cysteine 54-cysteine 69, cysteine 86-cysteine 115, cysteine 93-cysteine 119, cysteine 102-cysteine 114, and cysteine 108-cysteine 123. The tract at residues 81–129 is elastase inhibitory domain; it reads VKPGKCPVVYGQCMMLNPPNHCKTDSQCLGDLKCCKSMCGKVCLTPVKA.

In terms of assembly, interacts with GRN; interaction protects progranulin from proteolysis. In terms of tissue distribution, found in pregnant endometrium and myometrium, placenta, allantoic fluids, fetal cord blood, and fetal liver. Also found in uterus and lung.

It localises to the secreted. Functionally, acid-stable proteinase inhibitor with strong affinities for trypsin, chymotrypsin, elastase, and cathepsin G. Modulates the inflammatory and immune responses after bacterial infection, and after infection by the intracellular parasite L.major. Down-regulates responses to bacterial lipopolysaccharide (LPS). Plays a role in regulating the activation of NF-kappa-B and inflammatory responses. Has antimicrobial activity against mycobacteria, but not against salmonella. Contributes to normal resistance against infection by M.tuberculosis. Required for normal resistance to infection by L.major. Required for normal wound healing, probably by preventing tissue damage by limiting protease activity. Together with ELANE, required for normal differentiation and proliferation of bone marrow myeloid cells. The sequence is that of Antileukoproteinase (SLPI) from Sus scrofa (Pig).